Consider the following 464-residue polypeptide: Cysteine--tRNA ligase (464 aa).

C27 provides a ligand contact to Zn(2+). The 'HIGH' region signature appears at 29 to 39 (PTVYDDAHLGH). The Zn(2+) site is built by C203, H234, and E238. Residues 266-270 (KMSKS) carry the 'KMSKS' region motif. K269 contacts ATP.

It belongs to the class-I aminoacyl-tRNA synthetase family. In terms of assembly, monomer. Zn(2+) is required as a cofactor.

The protein resides in the cytoplasm. It catalyses the reaction tRNA(Cys) + L-cysteine + ATP = L-cysteinyl-tRNA(Cys) + AMP + diphosphate. This Campylobacter concisus (strain 13826) protein is Cysteine--tRNA ligase.